Consider the following 336-residue polypeptide: tRNA-cytidine(32) 2-sulfurtransferase (336 aa).

The segment at 1–34 is disordered; it reads MNAPEILNGAATASPADATEATQTAARAKTPLTR. Low complexity predominate over residues 10-22; the sequence is AATASPADATEAT. The short motif at 75–80 is the PP-loop motif element; the sequence is SGGKDS. Residues Cys-150, Cys-153, and Cys-241 each contribute to the [4Fe-4S] cluster site.

The protein belongs to the TtcA family. In terms of assembly, homodimer. Requires Mg(2+) as cofactor. It depends on [4Fe-4S] cluster as a cofactor.

It is found in the cytoplasm. The catalysed reaction is cytidine(32) in tRNA + S-sulfanyl-L-cysteinyl-[cysteine desulfurase] + AH2 + ATP = 2-thiocytidine(32) in tRNA + L-cysteinyl-[cysteine desulfurase] + A + AMP + diphosphate + H(+). It functions in the pathway tRNA modification. Its function is as follows. Catalyzes the ATP-dependent 2-thiolation of cytidine in position 32 of tRNA, to form 2-thiocytidine (s(2)C32). The sulfur atoms are provided by the cysteine/cysteine desulfurase (IscS) system. The polypeptide is tRNA-cytidine(32) 2-sulfurtransferase (Paraburkholderia phytofirmans (strain DSM 17436 / LMG 22146 / PsJN) (Burkholderia phytofirmans)).